The sequence spans 149 residues: Protein E6 (149 aa).

2 zinc fingers span residues 30–66 (CVEC…CKLC) and 103–139 (CIIC…CAAC). The PDZ-binding domain signature appears at 147 to 149 (TAL).

It belongs to the papillomaviridae E6 protein family. In terms of assembly, forms homodimers. Interacts with ubiquitin-protein ligase UBE3A/E6-AP and thus forms a complex with human TP53. Interacts with human NFX1 and MAGI3. Interacts with human IRF3; this interaction inhibits the establishment of antiviral state. Interacts with human TYK2; this interaction inhibits JAK-STAT activation by interferon alpha. Interacts with host DLG1; this interaction leads to the proteasomal degradation of DLG1.

It localises to the host cytoplasm. It is found in the host nucleus. Functionally, this protein may be involved in the oncogenic potential of this virus (cervical neoplasia-associated virus). Plays a major role in the induction and maintenance of cellular transformation. Acts mainly as an oncoprotein by stimulating the destruction of many host cell key regulatory proteins. E6 associates with host UBE3A/E6-AP ubiquitin-protein ligase, and inactivates tumor suppressors TP53 and TP73 by targeting them to the 26S proteasome for degradation. In turn, DNA damage and chromosomal instabilities increase and lead to cell proliferation and cancer development. The complex E6/E6AP targets several other substrates to degradation via the proteasome including host DLG1 or NFX1, a repressor of human telomerase reverse transcriptase (hTERT). The resulting increased expression of hTERT prevents the shortening of telomere length leading to cell immortalization. Other cellular targets including BAK1, Fas-associated death domain-containing protein (FADD) and procaspase 8, are degraded by E6/E6AP causing inhibition of apoptosis. E6 also inhibits immune response by interacting with host IRF3 and TYK2. These interactions prevent IRF3 transcriptional activities and inhibit TYK2-mediated JAK-STAT activation by interferon alpha resulting in inhibition of the interferon signaling pathway. This is Protein E6 from Homo sapiens (Human).